The primary structure comprises 297 residues: Adrenocorticotropic hormone receptor (297 aa).

Residues 1–23 (MKHIITPYEHTNDTARNNSDCPD) are Extracellular-facing. N-linked (GlcNAc...) asparagine glycosylation is found at Asn12 and Asn17. 2 disulfide bridges follow: Cys21-Cys253 and Cys245-Cys251. Residues 24-49 (VVLPEEIFFTISIIGVLENLIVLLAV) form a helical membrane-spanning segment. The Cytoplasmic portion of the chain corresponds to 50-58 (VKNKNLQCP). The helical transmembrane segment at 59 to 79 (MYFFICSLAISDMLGSLYKIL) threads the bilayer. At 80–104 (ENILIMFRNRGYLQPRGNFESTADD) the chain is on the extracellular side. The chain crosses the membrane as a helical span at residues 105–126 (IIDCMFILSLLGSIFSLSVIAA). Over 127–147 (DRYITIFHALQYHSIVTMRRT) the chain is Cytoplasmic. The helical transmembrane segment at 148 to 168 (IITLTVIWIFCTGSGIAMVIF) threads the bilayer. Topologically, residues 169-180 (SHHVPTVLTFTS) are extracellular. Residues 181–199 (LFPLMLVFILCLYIHMFLL) traverse the membrane as a helical segment. The Cytoplasmic portion of the chain corresponds to 200–217 (ARSHARKISTLPRANMKG). A helical transmembrane segment spans residues 218–244 (AITLTILLGVFIFCWAPFILHVLLMTF). The Extracellular portion of the chain corresponds to 245-256 (CPNNPYCVCYMS). The helical transmembrane segment at 257 to 278 (LFQINGMLIMCNAVIDPFIYAF) threads the bilayer. Residues 279 to 297 (RSPELRDAFKKMFSCHRYQ) are Cytoplasmic-facing. Cys293 carries S-palmitoyl cysteine lipidation.

Belongs to the G-protein coupled receptor 1 family. As to quaternary structure, homodimer. Interacts with corticotropin (ACTH). Interacts with MRAP; this interaction targets MC2R to the plasma membrane. Interacts with MRAP2; competing with MRAP for binding to MC2R and impairing the binding of corticotropin (ACTH). In terms of processing, ubiquitinated by MGRN1 that may be involved in post-endocytic trafficking and/or degradation of internalized receptor.

It is found in the cell membrane. Functionally, hormone receptor primarily expressed in adrenal cortex that plays a key role in regulating adrenocortical function. Upon corticotropin (ACTH) binding, facilitates the release of adrenal glucocorticoids, including cortisol and corticosterone. In addition, MC2R is required for fetal and neonatal adrenal gland development. Mechanistically, activates adenylate cyclase (cAMP), the MAPK cascade as well as the cAMP-dependent protein kinase A pathway leading to steroidogenic factor 1/NR5A1-mediated transcriptional activation. This Mesocricetus auratus (Golden hamster) protein is Adrenocorticotropic hormone receptor (MC2R).